The primary structure comprises 628 residues: tRNA uridine 5-carboxymethylaminomethyl modification enzyme MnmG 1 (628 aa).

FAD is bound at residue 11–16 (GAGHAG). NAD(+) is bound at residue 280–294 (GPRHCPSIDRKVLNF).

Belongs to the MnmG family. As to quaternary structure, homodimer. Heterotetramer of two MnmE and two MnmG subunits. FAD serves as cofactor.

It localises to the cytoplasm. NAD-binding protein involved in the addition of a carboxymethylaminomethyl (cmnm) group at the wobble position (U34) of certain tRNAs, forming tRNA-cmnm(5)s(2)U34. In Fusobacterium nucleatum subsp. nucleatum (strain ATCC 25586 / DSM 15643 / BCRC 10681 / CIP 101130 / JCM 8532 / KCTC 2640 / LMG 13131 / VPI 4355), this protein is tRNA uridine 5-carboxymethylaminomethyl modification enzyme MnmG 1.